The sequence spans 2545 residues: Methylphloroacetophenone synthase (2545 aa).

Residues 8–261 (AFGALAPWPA…HVAIHEGIPQ (254 aa)) are N-terminal acylcarrier protein transacylase (SAT) domain. One can recognise a Ketosynthase family 3 (KS3) domain in the interval 383–798 (KDAIAIIGMG…GSNAAMIVLE (416 aa)). Catalysis depends on for beta-ketoacyl synthase activity residues Cys547, His682, and His721. The interval 914–1218 (LCFGGQVSDR…VSLQLNKPNS (305 aa)) is malonyl-CoA:ACP transacylase (MAT) domain. Ser1001 acts as the For acyl/malonyl transferase activity in catalysis. Residues 1293 to 1423 (LPAVLIRLKS…GTVNLKVADD (131 aa)) are N-terminal hotdog fold. The 313-residue stretch at 1293 to 1605 (LPAVLIRLKS…FTDIRRPVPI (313 aa)) folds into the PKS/mFAS DH domain. The interval 1296 to 1604 (VLIRLKSFDS…NFTDIRRPVP (309 aa)) is product template (PT) domain. The segment at 1449–1605 (RSESLRGNVL…FTDIRRPVPI (157 aa)) is C-terminal hotdog fold. The 75-residue stretch at 1657–1731 (TSIYEDICGL…SLVDYLHGKG (75 aa)) folds into the Carrier domain. An O-(pantetheine 4'-phosphoryl)serine modification is found at Ser1691. Low complexity predominate over residues 1748–1768 (SSSHAISTGASSPPDSSGASA). Positions 1748–1773 (SSSHAISTGASSPPDSSGASAMTTPP) are disordered. A methyltransferase (CMeT) domain region spans residues 1931-2163 (FGASETKLLN…GFKHVSWTDG (233 aa)). The segment at 2198–2544 (AGVPMEEVVW…YDFICRQLGM (347 aa)) is claisen cyclase (CLC) domain. Catalysis depends on for thioesterase activity residues Ser2321, Asp2481, and His2513.

In terms of biological role, methylphloroacetophenone synthase; part of the gene cluster that mediates the biosynthesis of usnic acid, a dibenzofuran lichen product possessing a broad spectrum of biological activities. Two genes, mpas and mpao, comprise the usnic acid biosynthetic gene cluster with a single post-PKS enzyme, the methylphloracetophenone oxidase (mpao). The methylphloroacetophenone synthase (mpas) is a non-reducing polyketide synthase that produces methylphloracetophenone from acetate via a methylated tetraketide intermediate. The methylphloroacetophenone oxidase then carries out the oxidative dimerization of methylphloracetophenone to usnic acid. This Cladonia uncialis (Cup lichen) protein is Methylphloroacetophenone synthase.